The following is a 334-amino-acid chain: Forkhead box protein N2 (334 aa).

Disordered regions lie at residues 1-52 (MGPV…SGTT) and 83-108 (SPLYDIEGDLSPSGCQTPEKLSASSK). Residues 108-204 (KPPYSFSLLI…QALKKQPFSS (97 aa)) constitute a DNA-binding region (fork-head).

It localises to the nucleus. The protein is Forkhead box protein N2 of Xenopus tropicalis (Western clawed frog).